The sequence spans 365 residues: Caffeic acid 3-O-methyltransferase (365 aa).

Residue Asn133 participates in (E)-ferulate binding. S-adenosyl-L-homocysteine contacts are provided by Gly210, Asp233, Asp253, Met254, Met266, and Lys267. The active-site Proton acceptor is His271. Asp272 serves as a coordination point for (E)-5-hydroxyferulate.

The protein belongs to the class I-like SAM-binding methyltransferase superfamily. Cation-independent O-methyltransferase family. COMT subfamily. As to quaternary structure, homodimer.

The enzyme catalyses (E)-caffeate + S-adenosyl-L-methionine = (E)-ferulate + S-adenosyl-L-homocysteine + H(+). It catalyses the reaction (E)-5-hydroxyferulate + S-adenosyl-L-methionine = (E)-sinapate + S-adenosyl-L-homocysteine + H(+). Its pathway is aromatic compound metabolism; phenylpropanoid biosynthesis. With respect to regulation, inhibited by Cu(2+), and to a lesser extent by Ni(2+), Mn(2+), Co(2+), Fe(3+) and Zn(2+). Unaffected by Fe(2+) and Mg(2+). Functionally, catalyzes the conversion of caffeic acid to ferulic acid and of 5-hydroxyferulic acid to sinapic acid. The resulting products may subsequently be converted to the corresponding alcohols that are incorporated into lignins. This Ammi majus (Bishop's weed) protein is Caffeic acid 3-O-methyltransferase.